The primary structure comprises 147 residues: Hemoglobin subunit beta-2 (147 aa).

Positions 3-147 constitute a Globin domain; that stretch reads EWTDSERAII…VVSALGRQYH (145 aa). Heme b is bound by residues His-64 and His-93.

Belongs to the globin family. In terms of assembly, hb 3 is a heterotetramer of two alpha-2 and two beta-2 chains. In terms of tissue distribution, red blood cells.

In terms of biological role, involved in oxygen transport from gills to the various peripheral tissues. The chain is Hemoglobin subunit beta-2 (hbb2) from Arctogadus glacialis (Arctic cod).